Consider the following 244-residue polypeptide: Dirigent protein 18 (244 aa).

Residues 1–25 form the signal peptide; the sequence is MMKQSPFSLLTSIFLIAALFTATTA.

This sequence belongs to the plant dirigent protein family. Homodimer.

Its subcellular location is the secreted. It localises to the extracellular space. The protein resides in the apoplast. Dirigent proteins impart stereoselectivity on the phenoxy radical-coupling reaction, yielding optically active lignans from two molecules of coniferyl alcohol in the biosynthesis of lignans, flavonolignans, and alkaloids and thus plays a central role in plant secondary metabolism. This Arabidopsis thaliana (Mouse-ear cress) protein is Dirigent protein 18 (DIR18).